The sequence spans 276 residues: Light-independent protochlorophyllide reductase iron-sulfur ATP-binding protein (276 aa).

ATP contacts are provided by residues 12–17 (GIGKST) and Lys41. Residue Ser16 participates in Mg(2+) binding. The [4Fe-4S] cluster site is built by Cys97 and Cys131. 182-183 (NR) is an ATP binding site.

The protein belongs to the NifH/BchL/ChlL family. In terms of assembly, homodimer. Protochlorophyllide reductase is composed of three subunits; BchL, BchN and BchB. Requires [4Fe-4S] cluster as cofactor.

It catalyses the reaction chlorophyllide a + oxidized 2[4Fe-4S]-[ferredoxin] + 2 ADP + 2 phosphate = protochlorophyllide a + reduced 2[4Fe-4S]-[ferredoxin] + 2 ATP + 2 H2O. Its pathway is porphyrin-containing compound metabolism; bacteriochlorophyll biosynthesis (light-independent). Functionally, component of the dark-operative protochlorophyllide reductase (DPOR) that uses Mg-ATP and reduced ferredoxin to reduce ring D of protochlorophyllide (Pchlide) to form chlorophyllide a (Chlide). This reaction is light-independent. The L component serves as a unique electron donor to the NB-component of the complex, and binds Mg-ATP. This is Light-independent protochlorophyllide reductase iron-sulfur ATP-binding protein from Chlorobium chlorochromatii (strain CaD3).